A 557-amino-acid chain; its full sequence is Dihydroxy-acid dehydratase (557 aa).

Residue D78 coordinates Mg(2+). C119 lines the [2Fe-2S] cluster pocket. 2 residues coordinate Mg(2+): D120 and K121. An N6-carboxylysine modification is found at K121. A [2Fe-2S] cluster-binding site is contributed by C192. E446 is a binding site for Mg(2+). The Proton acceptor role is filled by S472.

This sequence belongs to the IlvD/Edd family. As to quaternary structure, homodimer. [2Fe-2S] cluster is required as a cofactor. Requires Mg(2+) as cofactor.

The enzyme catalyses (2R)-2,3-dihydroxy-3-methylbutanoate = 3-methyl-2-oxobutanoate + H2O. It catalyses the reaction (2R,3R)-2,3-dihydroxy-3-methylpentanoate = (S)-3-methyl-2-oxopentanoate + H2O. Its pathway is amino-acid biosynthesis; L-isoleucine biosynthesis; L-isoleucine from 2-oxobutanoate: step 3/4. It functions in the pathway amino-acid biosynthesis; L-valine biosynthesis; L-valine from pyruvate: step 3/4. Its function is as follows. Functions in the biosynthesis of branched-chain amino acids. Catalyzes the dehydration of (2R,3R)-2,3-dihydroxy-3-methylpentanoate (2,3-dihydroxy-3-methylvalerate) into 2-oxo-3-methylpentanoate (2-oxo-3-methylvalerate) and of (2R)-2,3-dihydroxy-3-methylbutanoate (2,3-dihydroxyisovalerate) into 2-oxo-3-methylbutanoate (2-oxoisovalerate), the penultimate precursor to L-isoleucine and L-valine, respectively. The polypeptide is Dihydroxy-acid dehydratase (Campylobacter fetus subsp. fetus (strain 82-40)).